The primary structure comprises 490 residues: Glutamyl-tRNA(Gln) amidotransferase subunit A (490 aa).

Residues Lys80 and Ser155 each act as charge relay system in the active site. The active-site Acyl-ester intermediate is the Ser179.

Belongs to the amidase family. GatA subfamily. As to quaternary structure, heterotrimer of A, B and C subunits.

The catalysed reaction is L-glutamyl-tRNA(Gln) + L-glutamine + ATP + H2O = L-glutaminyl-tRNA(Gln) + L-glutamate + ADP + phosphate + H(+). Its function is as follows. Allows the formation of correctly charged Gln-tRNA(Gln) through the transamidation of misacylated Glu-tRNA(Gln) in organisms which lack glutaminyl-tRNA synthetase. The reaction takes place in the presence of glutamine and ATP through an activated gamma-phospho-Glu-tRNA(Gln). This chain is Glutamyl-tRNA(Gln) amidotransferase subunit A, found in Brevibacillus brevis (strain 47 / JCM 6285 / NBRC 100599).